A 117-amino-acid polypeptide reads, in one-letter code: MVASDSRPMRLRLRAELFLASFAVREESIRSKKEWTYISKYIKGILKSRLSRREQSRWNIIDDTTSMAFFEEFASLNPVFHTFLFYGRRDGEDLSFHIVGFFRLSIRGYIFFLWESF.

The protein resides in the mitochondrion. This is an uncharacterized protein from Arabidopsis thaliana (Mouse-ear cress).